Reading from the N-terminus, the 483-residue chain is MSTARTENPVIMGLSSQNGQLRGPVKPTGGPGGGGTQTQQQMNQLKNTNTINNGTQQQAQSMTTTIKPGDDWKKTLKLPPKDLRIKTSDVTSTKGNEFEDYCLKRELLMGIFEMGWEKPSPIQEESIPIALSGRDILARAKNGTGKSGAYLIPLLERLDLKKDNIQAMVIVPTRELALQVSQICIQVSKHMGGAKVMATTGGTNLRGDIMRLDDTVHVVIATPGRILDLIKKGVAKVDHVQMIVLDEADKLLSQDFVQIMEDIILTLPKNRQILLYSATFPLSVQKFMNSHLQKPYEINLMEELTLKGVTQYYAYVTERQKVHCLNTLFSRLQINQSIIFCNSSQRVELLAKKISQLGYSCFYIHAKMRQEHRNRVFHDFRNGLCRNLVCTDLFTRGIDIQAVNVVINFDFPKLAETYLHRIGGSGRFGHLGLAINLITYDDRFNLKSIEEQLGTEIKPIPSNIDKSLYVAEYHSEPVEDEKP.

A disordered region spans residues 1 to 40; sequence MSTARTENPVIMGLSSQNGQLRGPVKPTGGPGGGGTQTQQ. Threonine 36 bears the Phosphothreonine mark. Positions 96 to 124 match the Q motif motif; sequence NEFEDYCLKRELLMGIFEMGWEKPSPIQE. The Helicase ATP-binding domain occupies 127–298; that stretch reads IPIALSGRDI…NSHLQKPYEI (172 aa). Position 140-147 (140-147) interacts with ATP; sequence AKNGTGKS. The DEAD box signature appears at 246–249; that stretch reads DEAD. Residues 308–468 form the Helicase C-terminal domain; it reads GVTQYYAYVT…PIPSNIDKSL (161 aa).

The protein belongs to the DEAD box helicase family. DDX6/DHH1 subfamily. Interacts with LSM14A, LSM14B, EIF4ENIF1/4E-T, PATL1, EDC3 and EDC4. Forms a complex with DCP1A, DCP2, EDC3 and EDC4/HEDLS. Interacts with LIMD1, WTIP and AJUBA. Interacts with APOBEC3G in an RNA-dependent manner. Interacts with RC3H1. Interacts with ATXN2L. Interacts with MCRIP1. Interacts with MCRIP2. Interacts with NUFIP2. Interacts with TRIM71 (via NHL repeats) in an RNA-dependent manner. Sumoylated.

The protein localises to the cytoplasm. The protein resides in the P-body. Its subcellular location is the nucleus. It is found in the cytoplasmic ribonucleoprotein granule. The enzyme catalyses ATP + H2O = ADP + phosphate + H(+). Functionally, essential for the formation of P-bodies, cytosolic membrane-less ribonucleoprotein granules involved in RNA metabolism through the coordinated storage of mRNAs encoding regulatory functions. Plays a role in P-bodies to coordinate the storage of translationally inactive mRNAs in the cytoplasm and prevent their degradation. In the process of mRNA degradation, plays a role in mRNA decapping. Blocks autophagy in nutrient-rich conditions by repressing the expression of ATG-related genes through degradation of their transcripts. This Pongo abelii (Sumatran orangutan) protein is Probable ATP-dependent RNA helicase DDX6 (DDX6).